The primary structure comprises 221 residues: Membrane protein 0 (221 aa).

The segment at 1–22 (MATVHYSRRPGTPPVTLTSSPG) is disordered. A PPXY motif motif is present at residues 44–47 (PPPY). A helical transmembrane segment spans residues 100-120 (FLILFGILTLTAVVVAIVAVF).

It belongs to the varicellovirus ORF0 protein family. Interacts with host ITCH; this interaction probably mediates ITCH degradation.

The protein resides in the host Golgi apparatus membrane. The sequence is that of Membrane protein 0 from Homo sapiens (Human).